We begin with the raw amino-acid sequence, 371 residues long: Capsular polysaccharide phosphotransferase cps12A (371 aa).

It belongs to the stealth family.

Its function is as follows. Part of a capsular polysaccharide synthesis locus. This Actinobacillus pleuropneumoniae (Haemophilus pleuropneumoniae) protein is Capsular polysaccharide phosphotransferase cps12A (cps12A).